The following is a 541-amino-acid chain: Membrane protein insertase YidC (541 aa).

The next 5 helical transmembrane spans lie at 6–26 (NILL…WQAD), 349–369 (FVGN…GLLF), 420–440 (GGCL…WVLL), 457–477 (LSVQ…MFVM), and 500–520 (VIFT…WLVG).

The protein belongs to the OXA1/ALB3/YidC family. Type 1 subfamily. In terms of assembly, interacts with the Sec translocase complex via SecD. Specifically interacts with transmembrane segments of nascent integral membrane proteins during membrane integration.

It localises to the cell inner membrane. Functionally, required for the insertion and/or proper folding and/or complex formation of integral membrane proteins into the membrane. Involved in integration of membrane proteins that insert both dependently and independently of the Sec translocase complex, as well as at least some lipoproteins. Aids folding of multispanning membrane proteins. The polypeptide is Membrane protein insertase YidC (Shewanella sp. (strain MR-7)).